We begin with the raw amino-acid sequence, 90 residues long: uncharacterized protein (90 aa).

The helical transmembrane segment at 32-52 threads the bilayer; that stretch reads IIINLIPLVLLFAFFCPCIYF.

The protein resides in the membrane. This is an uncharacterized protein from Schizosaccharomyces pombe (strain 972 / ATCC 24843) (Fission yeast).